The primary structure comprises 182 residues: CDP-diacylglycerol--glycerol-3-phosphate 3-phosphatidyltransferase (182 aa).

The Cytoplasmic portion of the chain corresponds to 2–12 (QFNIPTLLTLF). Residues 13–37 (RVILIPFFVLVFYLPVTWSPFAAAL) traverse the membrane as a helical segment. Over 38–60 (IFCVAAVTDWFDGFLARRWNQST) the chain is Periplasmic. The helical transmembrane segment at 61–81 (RFGAFLDPVADKVLVAIAMVL) threads the bilayer. The Cytoplasmic portion of the chain corresponds to 82–86 (VTEHY). The chain crosses the membrane as a helical span at residues 87-107 (HSWWVTLPAATMIAREIIISA). The Periplasmic segment spans residues 108-145 (LREWMAELGKRSSVAVSWIGKVKTTAQMVALAWLLWRP). A helical membrane pass occupies residues 146–168 (NIWVEYVGIALFFVAAVLTLWSM). Residues 169–181 (LQYLSAARADLLD) are Cytoplasmic-facing.

This sequence belongs to the CDP-alcohol phosphatidyltransferase class-I family.

The protein resides in the cell inner membrane. It catalyses the reaction a CDP-1,2-diacyl-sn-glycerol + sn-glycerol 3-phosphate = a 1,2-diacyl-sn-glycero-3-phospho-(1'-sn-glycero-3'-phosphate) + CMP + H(+). It functions in the pathway phospholipid metabolism; phosphatidylglycerol biosynthesis; phosphatidylglycerol from CDP-diacylglycerol: step 1/2. Its function is as follows. Catalyzes the conversion of cytidine diphosphate diacylglycerol (CDP-DG) and glycerol 3-phosphate into phosphatidylglycerol. Essential for the synthesis of anionic phospholipids, thereby playing a role in balancing the ratio of zwitterionic and anionic phospholipids, which is thought to be important for normal membrane function. This chain is CDP-diacylglycerol--glycerol-3-phosphate 3-phosphatidyltransferase, found in Shigella boydii serotype 4 (strain Sb227).